Consider the following 131-residue polypeptide: Bypass of stop codon protein 4 (131 aa).

In Saccharomyces cerevisiae (strain ATCC 204508 / S288c) (Baker's yeast), this protein is Bypass of stop codon protein 4 (BSC4).